Consider the following 622-residue polypeptide: MNKPLIHILPPQLANQIAAGEVVERPASVVKELVENSLDAGANQIQIDIEKGGAQLIRIRDNGCGIGKQDLALALARHATSKISSLEDLEMILSLGFRGEALASISSVSRLTLTSRPAGQAEAWQAYAQGREMEVEIQPASHPVGTTIEVANLFFNTPARRKFLRTDKTEFTHIDEVVRRIALAKPNIGFTLTHNGKTVRQYRKVQDNSVEQQQRRVAAICGDDFIQNAIHIDWQHGDLHLHGWIGLPNISRPQNDLCYSYVNGRMMRDKTINHAIRQAYEATDMPEGNYPAFVVFLDIDPSQVDVNVHPAKHEVRFHQGRLVHDFILQGVQTALQGQAEIDLTHQVNEPLPSYQRNTNRMAAGGNSFLASQQAVEFTENFAKPTASHMPNYSPRTSGVSKSAQKWYGELVSQPQNQSDNIQDLIEPKANFAPVIFAQEIDEAEPKPTQVVSAAIGHWQPLAIVQNQALLLKAEQQFYLLSLEKLARLRFQTQLTKGESQALLIPLNLSLDEQQTQRWQTLKTPLAELGFAISEKTWQGQIRLSVTQVPRLLREQNLQQILLSLFASQAVDLTEFFAKFAPIPTAYSLAEAVNWLAETEQTAKSELEKLKVAVDFSAFLARC.

The protein belongs to the DNA mismatch repair MutL/HexB family.

In terms of biological role, this protein is involved in the repair of mismatches in DNA. It is required for dam-dependent methyl-directed DNA mismatch repair. May act as a 'molecular matchmaker', a protein that promotes the formation of a stable complex between two or more DNA-binding proteins in an ATP-dependent manner without itself being part of a final effector complex. The polypeptide is DNA mismatch repair protein MutL (Actinobacillus pleuropneumoniae serotype 3 (strain JL03)).